Consider the following 561-residue polypeptide: DNA ligase B (561 aa).

The active-site N6-AMP-lysine intermediate is the Lys125.

It belongs to the NAD-dependent DNA ligase family. LigB subfamily.

It carries out the reaction NAD(+) + (deoxyribonucleotide)n-3'-hydroxyl + 5'-phospho-(deoxyribonucleotide)m = (deoxyribonucleotide)n+m + AMP + beta-nicotinamide D-nucleotide.. Functionally, catalyzes the formation of phosphodiester linkages between 5'-phosphoryl and 3'-hydroxyl groups in double-stranded DNA using NAD as a coenzyme and as the energy source for the reaction. In Salmonella agona (strain SL483), this protein is DNA ligase B.